Here is a 162-residue protein sequence, read N- to C-terminus: 2-C-methyl-D-erythritol 2,4-cyclodiphosphate synthase (162 aa).

Positions 8 and 10 each coordinate a divalent metal cation. Residues 8–10 (DVH) and 34–35 (HS) each bind 4-CDP-2-C-methyl-D-erythritol 2-phosphate. His-42 contacts a divalent metal cation. 4-CDP-2-C-methyl-D-erythritol 2-phosphate is bound by residues 56 to 58 (DIG), 61 to 65 (FPDND), 132 to 135 (TTTE), Phe-139, and Lys-142.

It belongs to the IspF family. In terms of assembly, homotrimer. A divalent metal cation is required as a cofactor.

The enzyme catalyses 4-CDP-2-C-methyl-D-erythritol 2-phosphate = 2-C-methyl-D-erythritol 2,4-cyclic diphosphate + CMP. It participates in isoprenoid biosynthesis; isopentenyl diphosphate biosynthesis via DXP pathway; isopentenyl diphosphate from 1-deoxy-D-xylulose 5-phosphate: step 4/6. Its function is as follows. Involved in the biosynthesis of isopentenyl diphosphate (IPP) and dimethylallyl diphosphate (DMAPP), two major building blocks of isoprenoid compounds. Catalyzes the conversion of 4-diphosphocytidyl-2-C-methyl-D-erythritol 2-phosphate (CDP-ME2P) to 2-C-methyl-D-erythritol 2,4-cyclodiphosphate (ME-CPP) with a corresponding release of cytidine 5-monophosphate (CMP). This chain is 2-C-methyl-D-erythritol 2,4-cyclodiphosphate synthase, found in Pelotomaculum thermopropionicum (strain DSM 13744 / JCM 10971 / SI).